The following is a 60-amino-acid chain: Large ribosomal subunit protein bL32 (60 aa).

The protein belongs to the bacterial ribosomal protein bL32 family.

The chain is Large ribosomal subunit protein bL32 from Borreliella afzelii (strain PKo) (Borrelia afzelii).